A 271-amino-acid polypeptide reads, in one-letter code: 4-diphosphocytidyl-2-C-methyl-D-erythritol kinase (271 aa).

Lysine 17 is an active-site residue. 97-107 is an ATP binding site; sequence PVGSGLGGGSS. Aspartate 137 is a catalytic residue.

Belongs to the GHMP kinase family. IspE subfamily.

The enzyme catalyses 4-CDP-2-C-methyl-D-erythritol + ATP = 4-CDP-2-C-methyl-D-erythritol 2-phosphate + ADP + H(+). Its pathway is isoprenoid biosynthesis; isopentenyl diphosphate biosynthesis via DXP pathway; isopentenyl diphosphate from 1-deoxy-D-xylulose 5-phosphate: step 3/6. Its function is as follows. Catalyzes the phosphorylation of the position 2 hydroxy group of 4-diphosphocytidyl-2C-methyl-D-erythritol. The polypeptide is 4-diphosphocytidyl-2-C-methyl-D-erythritol kinase (Thermotoga petrophila (strain ATCC BAA-488 / DSM 13995 / JCM 10881 / RKU-1)).